Here is a 352-residue protein sequence, read N- to C-terminus: Uroporphyrinogen decarboxylase (352 aa).

Residues 26 to 30 (RQAGR), F45, D76, Y153, S208, and H323 contribute to the substrate site.

It belongs to the uroporphyrinogen decarboxylase family. Homodimer.

It is found in the cytoplasm. It catalyses the reaction uroporphyrinogen III + 4 H(+) = coproporphyrinogen III + 4 CO2. It participates in porphyrin-containing compound metabolism; protoporphyrin-IX biosynthesis; coproporphyrinogen-III from 5-aminolevulinate: step 4/4. Functionally, catalyzes the decarboxylation of four acetate groups of uroporphyrinogen-III to yield coproporphyrinogen-III. The protein is Uroporphyrinogen decarboxylase of Parasynechococcus marenigrum (strain WH8102).